Here is a 362-residue protein sequence, read N- to C-terminus: Peptide chain release factor 1 (362 aa).

Residue Gln-240 is modified to N5-methylglutamine.

It belongs to the prokaryotic/mitochondrial release factor family. Post-translationally, methylated by PrmC. Methylation increases the termination efficiency of RF1.

Its subcellular location is the cytoplasm. In terms of biological role, peptide chain release factor 1 directs the termination of translation in response to the peptide chain termination codons UAG and UAA. This is Peptide chain release factor 1 from Bifidobacterium longum (strain DJO10A).